The following is a 117-amino-acid chain: Large ribosomal subunit protein bL17 (117 aa).

It belongs to the bacterial ribosomal protein bL17 family. As to quaternary structure, part of the 50S ribosomal subunit. Contacts protein L32.

In Thermomicrobium roseum (strain ATCC 27502 / DSM 5159 / P-2), this protein is Large ribosomal subunit protein bL17.